Here is a 264-residue protein sequence, read N- to C-terminus: Segregation and condensation protein A (264 aa).

It belongs to the ScpA family. Component of a cohesin-like complex composed of ScpA, ScpB and the Smc homodimer, in which ScpA and ScpB bind to the head domain of Smc. The presence of the three proteins is required for the association of the complex with DNA.

Its subcellular location is the cytoplasm. Its function is as follows. Participates in chromosomal partition during cell division. May act via the formation of a condensin-like complex containing Smc and ScpB that pull DNA away from mid-cell into both cell halves. The polypeptide is Segregation and condensation protein A (Enterococcus faecalis (strain ATCC 700802 / V583)).